The chain runs to 368 residues: SH3 domain-containing protein 2 (368 aa).

2 coiled-coil regions span residues 1-21 and 146-210; these read MDAIRKQASRLREQVARQQQA and LEDA…LGKE. One can recognise a BAR domain in the interval 1–264; sequence MDAIRKQASR…MVSERQRIEA (264 aa). Residues 258-281 are disordered; the sequence is ERQRIEAPSTPSSADSMPPPPSYE. The region spanning 299–358 is the SH3 domain; sequence MGYFLGEVLFPYHGVTDVELSLSTGEYVVVRKVTGSGWAEGECKGKAGWFPYGYIERRER.

In terms of assembly, homodimer. Interacts with FREE1. Interacts (via SH3 domain) with ATG8E and ATG8F. Component of a phosphoinositide 3-kinase (PI3K) complex containing ATG6, SH3P2 and FREE1. Binds to SH3P3 and DRP1A. Forms a complex made of SH3P2 and DRP1A and triggers its accumulation at the cell plate. Highly expressed in seedlings. Detected in flowers, leaves and stems.

Its subcellular location is the cytoplasm. The protein localises to the cytoplasmic vesicle. It localises to the clathrin-coated vesicle. It is found in the cell membrane. The protein resides in the late endosome. Its subcellular location is the autophagosome membrane. Regulator for autophaosome formation and/or maturation. Binds phosphatidylinositol-phosphate; highest affinity for vesicles containing PtdIns(3,4,5)P(3), followed by those containing PtdIns(4,5)P(2) and PtdIns(3,4)P(2), with minimal binding to phosphatidylinositol monophosphates, including PtdIns(3)P. Together with DRP1A, converts the fused vesicles to tubular structures at the cell plate during cytokinesis. The sequence is that of SH3 domain-containing protein 2 from Arabidopsis thaliana (Mouse-ear cress).